We begin with the raw amino-acid sequence, 792 residues long: Probable exo-1,4-beta-xylosidase xlnD (792 aa).

The N-terminal stretch at 1-20 (MSVAKSIAAVLVALLPGALA) is a signal peptide. 5 N-linked (GlcNAc...) asparagine glycosylation sites follow: asparagine 23, asparagine 87, asparagine 118, asparagine 142, and asparagine 246. Residue aspartate 310 is part of the active site. N-linked (GlcNAc...) asparagine glycosylation is found at asparagine 326, asparagine 385, asparagine 404, asparagine 440, asparagine 477, asparagine 518, asparagine 679, and asparagine 701.

The protein belongs to the glycosyl hydrolase 3 family.

The protein localises to the secreted. The catalysed reaction is Hydrolysis of (1-&gt;4)-beta-D-xylans, to remove successive D-xylose residues from the non-reducing termini.. The protein operates within glycan degradation; xylan degradation. Functionally, xylan 1,4-beta-xylosidase involved in the hydrolysis of xylan, a major structural heterogeneous polysaccharide found in plant biomass representing the second most abundant polysaccharide in the biosphere, after cellulose. The protein is Probable exo-1,4-beta-xylosidase xlnD (xlnD) of Aspergillus fumigatus (strain CBS 144.89 / FGSC A1163 / CEA10) (Neosartorya fumigata).